The chain runs to 444 residues: ATPase PAAT (444 aa).

A phosphoserine mark is found at serine 177, serine 182, serine 254, and serine 302. A disordered region spans residues proline 424–arginine 444. Over residues arginine 431 to arginine 444 the composition is skewed to basic and acidic residues.

Homodimer. Interacts with ABCB7, ABCB8/MITOSUR and ABCB10.

The protein localises to the cytoplasm. Its subcellular location is the mitochondrion. The enzyme catalyses ATP + H2O = ADP + phosphate + H(+). In terms of biological role, ATPase that regulates mitochondrial ABC transporters ABCB7, ABCB8/MITOSUR and ABCB10. Regulates mitochondrial ferric concentration and heme biosynthesis and plays a role in the maintenance of mitochondrial homeostasis and cell survival. The sequence is that of ATPase PAAT from Rattus norvegicus (Rat).